The primary structure comprises 344 residues: Ferrochelatase (344 aa).

Residues His214 and Glu295 each contribute to the Fe cation site.

This sequence belongs to the ferrochelatase family.

The protein localises to the cytoplasm. It carries out the reaction heme b + 2 H(+) = protoporphyrin IX + Fe(2+). It functions in the pathway porphyrin-containing compound metabolism; protoheme biosynthesis; protoheme from protoporphyrin-IX: step 1/1. In terms of biological role, catalyzes the ferrous insertion into protoporphyrin IX. This chain is Ferrochelatase, found in Agrobacterium fabrum (strain C58 / ATCC 33970) (Agrobacterium tumefaciens (strain C58)).